Consider the following 483-residue polypeptide: Serine/threonine-protein phosphatase 2A regulatory subunit phr2AB (483 aa).

WD repeat units follow at residues 22–61 (SDAN…QSSK) and 88–129 (EIEE…IKQV). The disordered stretch occupies residues 132–152 (SATTTGPSYNGSLASNNTRSP). WD repeat units follow at residues 206–244 (AHAY…ECFN), 255–295 (DLTE…LCDN), 314–352 (EIIS…KPVK), and 369–410 (ENDC…DVCL). Residues 421–443 (TKTLTTKMKLRSSKKEPKKPEDI) form a disordered region. The segment covering 433-443 (SKKEPKKPEDI) has biased composition (basic and acidic residues). The stretch at 449–483 (EYTKKTLHCAWHPKDNLIAVGAANTVYLYAATENK) is one WD 7 repeat.

This sequence belongs to the phosphatase 2A regulatory subunit B family. In terms of assembly, PP2A consists of a trimeric holoenzyme, composed of a 37 kDa catalytic subunit (C subunit) and a 65 kDa constant regulatory subunit (A subunit), that associates with a variety of regulatory subunits (B subunit) such as phr2AB (B55) and psrA (B56 homolog). The trimer may partially dissociates into a core 'AC' dimer equally active compared to the trimer.

It localises to the cytoplasm. Its subcellular location is the cytosol. It is found in the cytoskeleton. The protein resides in the microtubule organizing center. The protein localises to the centrosome. In terms of biological role, the B regulatory subunit might modulate substrate selectivity and catalytic activity, and might also direct the localization of the catalytic enzyme to a particular subcellular compartment. The protein is Serine/threonine-protein phosphatase 2A regulatory subunit phr2AB (phr2aB) of Dictyostelium discoideum (Social amoeba).